The primary structure comprises 436 residues: Trigger factor (436 aa).

One can recognise a PPIase FKBP-type domain in the interval 163 to 248; the sequence is GDRVTIDFEG…VKKIEAAHLP (86 aa).

The protein belongs to the FKBP-type PPIase family. Tig subfamily.

The protein resides in the cytoplasm. The catalysed reaction is [protein]-peptidylproline (omega=180) = [protein]-peptidylproline (omega=0). Its function is as follows. Involved in protein export. Acts as a chaperone by maintaining the newly synthesized protein in an open conformation. Functions as a peptidyl-prolyl cis-trans isomerase. In Polaromonas naphthalenivorans (strain CJ2), this protein is Trigger factor.